A 207-amino-acid polypeptide reads, in one-letter code: Probable glutathione S-transferase 5 (207 aa).

Residues 2 to 81 form the GST N-terminal domain; that stretch reads VSYKLTYFNG…FLAREFKLNG (80 aa). Glutathione is bound by residues Tyr-8, Trp-39, Lys-43, 51–53, and 65–66; these read GQL and QS. Residues 83 to 207 form the GST C-terminal domain; it reads TAWEEAQVNS…WIETRPVTPF (125 aa).

This sequence belongs to the GST superfamily. Sigma family.

The catalysed reaction is RX + glutathione = an S-substituted glutathione + a halide anion + H(+). Its function is as follows. Conjugation of reduced glutathione to a wide number of exogenous and endogenous hydrophobic electrophiles. May play a role in the detoxification of reactive oxygen species produced during pathogenic bacterial infection. This is Probable glutathione S-transferase 5 (gst-5) from Caenorhabditis elegans.